A 68-amino-acid chain; its full sequence is MDNRLLEILVCPLCKGKLEYDRAAQELICHADKLAYPIRDGIPVMLADEARQSVPGRAVNPDGPASGN.

Belongs to the UPF0434 family.

In Cupriavidus necator (strain ATCC 17699 / DSM 428 / KCTC 22496 / NCIMB 10442 / H16 / Stanier 337) (Ralstonia eutropha), this protein is UPF0434 protein H16_A0605.